The chain runs to 808 residues: Phenylalanine--tRNA ligase beta subunit (808 aa).

Positions 40-157 (NKGATNVVVG…QSVEPGQDAL (118 aa)) constitute a tRNA-binding domain. In terms of domain architecture, B5 spans 411–486 (RSERVIALDL…RLYGYDELPS (76 aa)). Mg(2+) contacts are provided by Asp-464, Asp-470, Glu-473, and Glu-474. An FDX-ACB domain is found at 714–807 (PRYPAITRDM…VQKQTGAVLR (94 aa)).

The protein belongs to the phenylalanyl-tRNA synthetase beta subunit family. Type 1 subfamily. As to quaternary structure, tetramer of two alpha and two beta subunits. The cofactor is Mg(2+).

Its subcellular location is the cytoplasm. The catalysed reaction is tRNA(Phe) + L-phenylalanine + ATP = L-phenylalanyl-tRNA(Phe) + AMP + diphosphate + H(+). The sequence is that of Phenylalanine--tRNA ligase beta subunit from Shouchella clausii (strain KSM-K16) (Alkalihalobacillus clausii).